We begin with the raw amino-acid sequence, 381 residues long: 2-methylcitrate synthase 1 (381 aa).

His-192 lines the substrate pocket. Residue His-227 is part of the active site. Residue 260-264 (RIMGF) coordinates CoA. The active site involves His-266. Residue Arg-275 participates in substrate binding. Asp-317 is an active-site residue. Residues Arg-342 and Arg-361 each contribute to the substrate site.

The protein belongs to the citrate synthase family. In terms of assembly, homodimer.

The catalysed reaction is propanoyl-CoA + oxaloacetate + H2O = (2S,3S)-2-methylcitrate + CoA + H(+). It catalyses the reaction oxaloacetate + acetyl-CoA + H2O = citrate + CoA + H(+). It participates in carbohydrate metabolism; tricarboxylic acid cycle. In terms of biological role, catalyzes the Claisen condensation of propionyl-CoA and oxaloacetate (OAA) to yield 2-methylcitrate (2-MC) and CoA. Also catalyzes the condensation of oxaloacetate with propionyl-CoA but with a lower specificity. This chain is 2-methylcitrate synthase 1 (prpC1), found in Corynebacterium glutamicum (strain ATCC 13032 / DSM 20300 / JCM 1318 / BCRC 11384 / CCUG 27702 / LMG 3730 / NBRC 12168 / NCIMB 10025 / NRRL B-2784 / 534).